The sequence spans 440 residues: C4-dicarboxylate transport protein (440 aa).

9 helical membrane-spanning segments follow: residues 15–35 (VLVA…TGVA), 46–66 (LIKM…IAGM), 78–98 (YALL…LVVV), 146–166 (AFAN…GFAL), 190–210 (IINM…AFTI), 224–244 (LMAC…GGIC), 291–311 (VVGL…SIYL), 332–352 (ITLL…TGSG), and 354–374 (IVLA…LALI). The disordered stretch occupies residues 419–440 (GGSPLVDTRPTDDLGVAEGPAR).

This sequence belongs to the dicarboxylate/amino acid:cation symporter (DAACS) (TC 2.A.23) family.

It localises to the cell inner membrane. Responsible for the transport of dicarboxylates such as succinate, fumarate, and malate from the periplasm across the membrane. The polypeptide is C4-dicarboxylate transport protein (Pseudomonas entomophila (strain L48)).